The following is a 366-amino-acid chain: RNA 3'-terminal phosphate cyclase (366 aa).

ATP is bound by residues Gln-104, Pro-131, Tyr-294, Asp-297, Gln-298, and His-320. The Tele-AMP-histidine intermediate role is filled by His-320.

This sequence belongs to the RNA 3'-terminal cyclase family. Type 1 subfamily. In terms of tissue distribution, detected in retinal ganglion cells (RGCs) (at protein level).

The protein localises to the nucleus. It localises to the nucleoplasm. The catalysed reaction is a 3'-end 3'-phospho-ribonucleotide-RNA + ATP = a 3'-end 2',3'-cyclophospho-ribonucleotide-RNA + AMP + diphosphate. In terms of biological role, catalyzes the conversion of 3'-phosphate to a 2',3'-cyclic phosphodiester at the end of RNA. The mechanism of action of the enzyme occurs in 3 steps: (A) adenylation of the enzyme by ATP; (B) transfer of adenylate to an RNA-N3'P to produce RNA-N3'PP5'A; (C) and attack of the adjacent 2'-hydroxyl on the 3'-phosphorus in the diester linkage to produce the cyclic end product. Likely functions in some aspects of cellular RNA processing. Function plays an important role in regulating axon regeneration by inhibiting central nervous system (CNS) axon regeneration following optic nerve injury. This Mus musculus (Mouse) protein is RNA 3'-terminal phosphate cyclase.